The chain runs to 226 residues: Large ribosomal subunit protein uL1 (226 aa).

The protein belongs to the universal ribosomal protein uL1 family. As to quaternary structure, part of the 50S ribosomal subunit.

Its function is as follows. Binds directly to 23S rRNA. The L1 stalk is quite mobile in the ribosome, and is involved in E site tRNA release. Protein L1 is also a translational repressor protein, it controls the translation of the L11 operon by binding to its mRNA. The sequence is that of Large ribosomal subunit protein uL1 from Selenomonas ruminantium.